The sequence spans 256 residues: Thiazole synthase (256 aa).

The active-site Schiff-base intermediate with DXP is K95. Residues G156, 182–183 (AG), and 204–205 (NT) each bind 1-deoxy-D-xylulose 5-phosphate.

This sequence belongs to the ThiG family. As to quaternary structure, homotetramer. Forms heterodimers with either ThiH or ThiS.

The protein resides in the cytoplasm. The catalysed reaction is [ThiS sulfur-carrier protein]-C-terminal-Gly-aminoethanethioate + 2-iminoacetate + 1-deoxy-D-xylulose 5-phosphate = [ThiS sulfur-carrier protein]-C-terminal Gly-Gly + 2-[(2R,5Z)-2-carboxy-4-methylthiazol-5(2H)-ylidene]ethyl phosphate + 2 H2O + H(+). It participates in cofactor biosynthesis; thiamine diphosphate biosynthesis. Catalyzes the rearrangement of 1-deoxy-D-xylulose 5-phosphate (DXP) to produce the thiazole phosphate moiety of thiamine. Sulfur is provided by the thiocarboxylate moiety of the carrier protein ThiS. In vitro, sulfur can be provided by H(2)S. This Klebsiella pneumoniae (strain 342) protein is Thiazole synthase.